The sequence spans 692 residues: Elongation factor G (692 aa).

Positions 8–282 (EKTRNIGIMA…AVIDYLPSPL (275 aa)) constitute a tr-type G domain. Residues 17–24 (AHVDAGKT), 81–85 (DTPGH), and 135–138 (NKMD) each bind GTP.

The protein belongs to the TRAFAC class translation factor GTPase superfamily. Classic translation factor GTPase family. EF-G/EF-2 subfamily.

Its subcellular location is the cytoplasm. In terms of biological role, catalyzes the GTP-dependent ribosomal translocation step during translation elongation. During this step, the ribosome changes from the pre-translocational (PRE) to the post-translocational (POST) state as the newly formed A-site-bound peptidyl-tRNA and P-site-bound deacylated tRNA move to the P and E sites, respectively. Catalyzes the coordinated movement of the two tRNA molecules, the mRNA and conformational changes in the ribosome. The protein is Elongation factor G of Streptococcus agalactiae serotype III (strain NEM316).